A 186-amino-acid chain; its full sequence is Casparian strip membrane protein 6 (186 aa).

At 1–23 (MKAGPIELGEGKSSAPKAAVNRG) the chain is on the cytoplasmic side. A helical transmembrane segment spans residues 24 to 44 (VAILDFILRILAFIGTLGSAI). The Extracellular portion of the chain corresponds to 45-73 (SMATTNETLPFFTQFIRFRAEYDDLPTFT). Asn50 carries an N-linked (GlcNAc...) asparagine glycan. A helical transmembrane segment spans residues 74–94 (FFVVANGVVSAYLLFSLPFSI). At 95–106 (FNIVRSKAQNSR) the chain is on the cytoplasmic side. The chain crosses the membrane as a helical span at residues 107 to 127 (ILLIILDTAMLGLLSAGASAA). Topologically, residues 128 to 160 (AAIVYLAHQGNVRTNWSAICQQFNSFCERISGS) are extracellular. Asn142 carries an N-linked (GlcNAc...) asparagine glycan. A helical membrane pass occupies residues 161 to 181 (LIGSFIGVVVFILLISLSAVA). Topologically, residues 182 to 186 (LSRHK) are cytoplasmic.

It belongs to the Casparian strip membrane proteins (CASP) family. In terms of assembly, homodimer and heterodimers.

It is found in the cell membrane. Regulates membrane-cell wall junctions and localized cell wall deposition. Required for establishment of the Casparian strip membrane domain (CSD) and the subsequent formation of Casparian strips, a cell wall modification of the root endodermis that determines an apoplastic barrier between the intraorganismal apoplasm and the extraorganismal apoplasm and prevents lateral diffusion. The polypeptide is Casparian strip membrane protein 6 (Populus trichocarpa (Western balsam poplar)).